Here is a 272-residue protein sequence, read N- to C-terminus: Phosphate import ATP-binding protein PstB (272 aa).

The ABC transporter domain maps to 20 to 267 (VKKEVVYETN…PADQRTADYI (248 aa)). 58-65 (GPSGCGKS) contributes to the ATP binding site.

The protein belongs to the ABC transporter superfamily. Phosphate importer (TC 3.A.1.7) family. As to quaternary structure, the complex is composed of two ATP-binding proteins (PstB), two transmembrane proteins (PstC and PstA) and a solute-binding protein (PstS).

It is found in the cell membrane. It catalyses the reaction phosphate(out) + ATP + H2O = ADP + 2 phosphate(in) + H(+). Its function is as follows. Part of the ABC transporter complex PstSACB involved in phosphate import. Responsible for energy coupling to the transport system. The sequence is that of Phosphate import ATP-binding protein PstB from Geobacillus kaustophilus (strain HTA426).